The sequence spans 101 residues: Small ribosomal subunit protein bS18c (101 aa).

This sequence belongs to the bacterial ribosomal protein bS18 family. As to quaternary structure, part of the 30S ribosomal subunit.

Its subcellular location is the plastid. It is found in the chloroplast. The protein is Small ribosomal subunit protein bS18c of Carica papaya (Papaya).